The chain runs to 67 residues: Amphipathic peptide Tx348 (67 aa).

Positions 1 to 23 are cleaved as a signal peptide; the sequence is MKSQAFFLLFLVVLLLATTQSEA. Phenylalanine 33 bears the Phenylalanine amide mark. The propeptide occupies 37–67; it reads SMRNMDTMKYLYDPSLSAADLKTLQKLMENY.

Belongs to the non-disulfide-bridged peptide (NDBP) superfamily. Short antimicrobial peptide (group 4) family. Expressed by the venom gland.

The protein localises to the secreted. Its subcellular location is the target cell membrane. In terms of biological role, amphipathic peptide that has antibacterial activities. The polypeptide is Amphipathic peptide Tx348 (Buthus israelis (Israeli scorpion)).